The following is a 478-amino-acid chain: MSKVLSSLPVGERVGIAFSGGLDTSCAVAWMREKGAVPCAYTADIGQYDEPNIEEVPGRATEYGAEIARLVDAKRALVEEGLIALQCGAFHIRSGGKTYFNTTPLGRAVTGVMLVRAMRDDDVEIWGDGSTYKGNDIERFYRYGLIANPRLRIYKPWLDTAFVEELGGRTEISEWLVARGFPYRDATEKAYSTDANIWGATHEAKRLEELDAGLDIVEPIMGVAAWREDIEVAPETVSVSFEYGRPVALNGIEFADPVALVPEANAIGGRHGLGASDQIENRIIEAKSRGIYEAPGMALLHIAYERLLNAIHNEDTVANYHTEGRRLGRLMYEGRWLDPQSLMLRESLQRWVGSAITGEVTLRLRRGDDYTILDTTGPALSYHPDKLSMERVGNAAFGPADRIGQLTMRNLDIADSRSRLEQYAATGLIGGPTAELVGELQEGSARSILELDVSPEDDALSREIDASSEGAAFDAGTD.

ATP contacts are provided by residues 17–25 and A43; that span reads AFSGGLDTS. Residue Y99 participates in L-citrulline binding. Residues G129 and T131 each contribute to the ATP site. 3 residues coordinate L-aspartate: T131, N135, and D136. N135 is a binding site for L-citrulline. D136 is an ATP binding site. 2 residues coordinate L-citrulline: R139 and S192. D194 contacts ATP. Positions 201, 203, and 280 each coordinate L-citrulline.

The protein belongs to the argininosuccinate synthase family. Type 2 subfamily. Homotetramer.

It is found in the cytoplasm. It carries out the reaction L-citrulline + L-aspartate + ATP = 2-(N(omega)-L-arginino)succinate + AMP + diphosphate + H(+). The protein operates within amino-acid biosynthesis; L-arginine biosynthesis; L-arginine from L-ornithine and carbamoyl phosphate: step 2/3. This is Argininosuccinate synthase from Leifsonia xyli subsp. xyli (strain CTCB07).